A 538-amino-acid polypeptide reads, in one-letter code: RNA-binding protein RO60 (538 aa).

At Met1 the chain carries N-acetylmethionine. Residues Ser4 and Ser19 each carry the phosphoserine modification. The 354-residue stretch at 16–369 (IANSQDGYVW…TFKTVEPTGK (354 aa)) folds into the TROVE domain. The interval 120–284 (RIPTHLFTFI…EMPLTALLRN (165 aa)) is RNA-binding. Lys224 and Lys359 each carry N6-acetyllysine. Residues 361 to 538 (FKTVEPTGKR…VIRNFTLDMI (178 aa)) are VWFA-like domain. Residues Ser378, Ser380, and Thr445 each contribute to the a divalent metal cation site.

Belongs to the Ro 60 kDa family. As to quaternary structure, identified in a IGF2BP1-dependent mRNP granule complex containing untranslated mRNAs. Found in a complex with PUF60 and Y5 RNA. Interacts with RAB11FIP5.

The protein localises to the cytoplasm. RNA-binding protein that binds to misfolded non-coding RNAs, pre-5S rRNA, and several small cytoplasmic RNA molecules known as Y RNAs. Binds to endogenous Alu retroelements which are induced by type I interferon and stimulate porinflammatory cytokine secretion. Regulates the expression of Alu retroelements as well as inflammatory genes. May play roles in cilia formation and/or maintenance. This is RNA-binding protein RO60 from Homo sapiens (Human).